Reading from the N-terminus, the 257-residue chain is LexA repressor (257 aa).

Residues 64 to 84 (FREIGEAAGLKSPSSVKHQLQ) constitute a DNA-binding region (H-T-H motif). Active-site for autocatalytic cleavage activity residues include Ser-181 and Lys-218.

The protein belongs to the peptidase S24 family. As to quaternary structure, homodimer.

The catalysed reaction is Hydrolysis of Ala-|-Gly bond in repressor LexA.. In terms of biological role, represses a number of genes involved in the response to DNA damage (SOS response), including recA and lexA. In the presence of single-stranded DNA, RecA interacts with LexA causing an autocatalytic cleavage which disrupts the DNA-binding part of LexA, leading to derepression of the SOS regulon and eventually DNA repair. The sequence is that of LexA repressor from Bifidobacterium adolescentis (strain ATCC 15703 / DSM 20083 / NCTC 11814 / E194a).